Consider the following 473-residue polypeptide: MQYLPIFTKLDNKPVLVVGGGDVALRKCSALLKARASITLVAPKFCQQLIELASENKVTLIHEYFSEQHLKNMMLVIAATDLEHVNSQVFELANAHNIFVNVVDDQPKCTFIFPSIVDRNPITIAISSAGTAPVLARRLREKLETLIPQHIGPLATLVGGFRSKVKQRFKHFADRRQFWEGVFDSSVVSKVQTGDTQAAEQQLEHMLNAKAEPEGEVYVVGAGPGDPELLTLKALQLMQQADVVVYDYLVSDEIMELVRRDADLICVGKRLGDHSVAQQDTNQMLVDLAKQGKKVCRIKGGDPFIYGRGGEEVQVLAANKVNYQIVPGITAAAGCSAYAGIPLTHRDHAQAIQFVTGHCKKDGQELDWQSLAKPNQTLAIYMGVIKSPHIQAELLKHGRNANTPVAIIENGTRKNQRVITGKLGELADLITRNSVVSPALLIIGEVASLHQELHWFGAKAQTSSFAQPLTDVA.

A precorrin-2 dehydrogenase /sirohydrochlorin ferrochelatase region spans residues 1–203 (MQYLPIFTKL…GDTQAAEQQL (203 aa)). NAD(+)-binding positions include 22 to 23 (DV) and 43 to 44 (PK). Position 128 is a phosphoserine (Ser128). A uroporphyrinogen-III C-methyltransferase region spans residues 215-473 (GEVYVVGAGP…SFAQPLTDVA (259 aa)). Pro224 contributes to the S-adenosyl-L-methionine binding site. Catalysis depends on Asp247, which acts as the Proton acceptor. Catalysis depends on Lys269, which acts as the Proton donor. Residues 300-302 (GGD), Ile305, 330-331 (TA), Met382, and Gly411 contribute to the S-adenosyl-L-methionine site.

It in the N-terminal section; belongs to the precorrin-2 dehydrogenase / sirohydrochlorin ferrochelatase family. This sequence in the C-terminal section; belongs to the precorrin methyltransferase family.

The catalysed reaction is uroporphyrinogen III + 2 S-adenosyl-L-methionine = precorrin-2 + 2 S-adenosyl-L-homocysteine + H(+). It carries out the reaction precorrin-2 + NAD(+) = sirohydrochlorin + NADH + 2 H(+). The enzyme catalyses siroheme + 2 H(+) = sirohydrochlorin + Fe(2+). The protein operates within cofactor biosynthesis; adenosylcobalamin biosynthesis; precorrin-2 from uroporphyrinogen III: step 1/1. It functions in the pathway cofactor biosynthesis; adenosylcobalamin biosynthesis; sirohydrochlorin from precorrin-2: step 1/1. Its pathway is porphyrin-containing compound metabolism; siroheme biosynthesis; precorrin-2 from uroporphyrinogen III: step 1/1. It participates in porphyrin-containing compound metabolism; siroheme biosynthesis; siroheme from sirohydrochlorin: step 1/1. The protein operates within porphyrin-containing compound metabolism; siroheme biosynthesis; sirohydrochlorin from precorrin-2: step 1/1. Multifunctional enzyme that catalyzes the SAM-dependent methylations of uroporphyrinogen III at position C-2 and C-7 to form precorrin-2 via precorrin-1. Then it catalyzes the NAD-dependent ring dehydrogenation of precorrin-2 to yield sirohydrochlorin. Finally, it catalyzes the ferrochelation of sirohydrochlorin to yield siroheme. This chain is Siroheme synthase, found in Pseudoalteromonas translucida (strain TAC 125).